Reading from the N-terminus, the 62-residue chain is 6.7 kDa chloroplast outer envelope membrane protein (62 aa).

Over 1–17 (MESVAKPATTKEGSAKQ) the chain is Chloroplast intermembrane. A helical transmembrane segment spans residues 18–40 (AAIVVGVLALGWFAIQVAFIPLF). Topologically, residues 41 to 62 (NKVRGGGSDKKDDDVNAFTPDT) are cytoplasmic.

It localises to the plastid. Its subcellular location is the chloroplast outer membrane. The polypeptide is 6.7 kDa chloroplast outer envelope membrane protein (Spinacia oleracea (Spinach)).